The chain runs to 417 residues: Cytoplasmic tRNA 2-thiolation protein 2 (417 aa).

A compositionally biased stretch (acidic residues) spans 1 to 11 (MCSIVEDDFGD). The interval 1–24 (MCSIVEDDFGDEGGAHAMKEDTPQ) is disordered. Positions 13 to 22 (GGAHAMKEDT) are enriched in basic and acidic residues.

The protein belongs to the CTU2/NCS2 family.

It is found in the cytoplasm. It functions in the pathway tRNA modification; 5-methoxycarbonylmethyl-2-thiouridine-tRNA biosynthesis. Its function is as follows. Plays a central role in 2-thiolation of mcm(5)S(2)U at tRNA wobble positions of tRNA(Lys), tRNA(Glu) and tRNA(Gln). May act by forming a heterodimer with NCS6/CTU1 that ligates sulfur from thiocarboxylated URM1 onto the uridine of tRNAs at wobble position. This Anopheles gambiae (African malaria mosquito) protein is Cytoplasmic tRNA 2-thiolation protein 2.